The chain runs to 233 residues: NADP-dependent glyceraldehyde-3-phosphate dehydrogenase (233 aa).

7–8 serves as a coordination point for substrate; that stretch reads NY. 2 residues coordinate NADP(+): Lys30 and Ser33. 83–87 contributes to the NAD(+) binding site; that stretch reads GGDTG. Glu102 serves as the catalytic Proton acceptor. 135-137 is a binding site for substrate; the sequence is RCT. Cys136 (nucleophile) is an active-site residue. NADP(+)-binding residues include Glu180 and Glu229.

This sequence belongs to the aldehyde dehydrogenase family.

The protein localises to the cytoplasm. It catalyses the reaction D-glyceraldehyde 3-phosphate + NADP(+) + H2O = (2R)-3-phosphoglycerate + NADPH + 2 H(+). Functionally, important as a means of generating NADPH for biosynthetic reactions. This is NADP-dependent glyceraldehyde-3-phosphate dehydrogenase (GapN) from Scenedesmus vacuolatus (Green alga).